Here is a 551-residue protein sequence, read N- to C-terminus: Glucans biosynthesis protein D (551 aa).

A signal peptide (tat-type signal) is located at residues 1-32 (MDRRRFIKGSMAMAAVCGTSGIASLFSQAAFA).

It belongs to the OpgD/OpgG family. Post-translationally, predicted to be exported by the Tat system. The position of the signal peptide cleavage has not been experimentally proven.

It localises to the periplasm. It participates in glycan metabolism; osmoregulated periplasmic glucan (OPG) biosynthesis. Probably involved in the control of the structural glucose backbone of osmoregulated periplasmic glucans (OPGs). The sequence is that of Glucans biosynthesis protein D from Escherichia coli O127:H6 (strain E2348/69 / EPEC).